The following is a 166-amino-acid chain: RNA pyrophosphohydrolase (166 aa).

The Nudix hydrolase domain maps to 6 to 149 (GFRPNVGIIL…KRDVYRKAMM (144 aa)). The short motif at 38–59 (GGIHFGETPEQALYRELREEVG) is the Nudix box element.

This sequence belongs to the Nudix hydrolase family. RppH subfamily. Requires a divalent metal cation as cofactor.

In terms of biological role, accelerates the degradation of transcripts by removing pyrophosphate from the 5'-end of triphosphorylated RNA, leading to a more labile monophosphorylated state that can stimulate subsequent ribonuclease cleavage. The sequence is that of RNA pyrophosphohydrolase from Acinetobacter baylyi (strain ATCC 33305 / BD413 / ADP1).